Reading from the N-terminus, the 154-residue chain is Methylglyoxal synthase (154 aa).

An MGS-like domain is found at 6-154 (QSLPAKKNIA…KYLATRQIDI (149 aa)). Residues His-19, Lys-23, 45 to 48 (TGTT), and 65 to 66 (SG) each bind substrate. The Proton donor/acceptor role is filled by Asp-71. His-98 contacts substrate.

This sequence belongs to the methylglyoxal synthase family.

The enzyme catalyses dihydroxyacetone phosphate = methylglyoxal + phosphate. Catalyzes the formation of methylglyoxal from dihydroxyacetone phosphate. This chain is Methylglyoxal synthase, found in Pseudoalteromonas translucida (strain TAC 125).